The primary structure comprises 568 residues: 2-succinyl-5-enolpyruvyl-6-hydroxy-3-cyclohexene-1-carboxylate synthase (568 aa).

The protein belongs to the TPP enzyme family. MenD subfamily. In terms of assembly, homodimer. Mg(2+) serves as cofactor. It depends on Mn(2+) as a cofactor. Requires thiamine diphosphate as cofactor.

The catalysed reaction is isochorismate + 2-oxoglutarate + H(+) = 5-enolpyruvoyl-6-hydroxy-2-succinyl-cyclohex-3-ene-1-carboxylate + CO2. It participates in quinol/quinone metabolism; 1,4-dihydroxy-2-naphthoate biosynthesis; 1,4-dihydroxy-2-naphthoate from chorismate: step 2/7. The protein operates within quinol/quinone metabolism; menaquinone biosynthesis. Its function is as follows. Catalyzes the thiamine diphosphate-dependent decarboxylation of 2-oxoglutarate and the subsequent addition of the resulting succinic semialdehyde-thiamine pyrophosphate anion to isochorismate to yield 2-succinyl-5-enolpyruvyl-6-hydroxy-3-cyclohexene-1-carboxylate (SEPHCHC). The polypeptide is 2-succinyl-5-enolpyruvyl-6-hydroxy-3-cyclohexene-1-carboxylate synthase (Haemophilus influenzae (strain PittGG)).